The following is a 234-amino-acid chain: Leucyl/phenylalanyl-tRNA--protein transferase (234 aa).

It belongs to the L/F-transferase family.

It localises to the cytoplasm. The catalysed reaction is N-terminal L-lysyl-[protein] + L-leucyl-tRNA(Leu) = N-terminal L-leucyl-L-lysyl-[protein] + tRNA(Leu) + H(+). It catalyses the reaction N-terminal L-arginyl-[protein] + L-leucyl-tRNA(Leu) = N-terminal L-leucyl-L-arginyl-[protein] + tRNA(Leu) + H(+). The enzyme catalyses L-phenylalanyl-tRNA(Phe) + an N-terminal L-alpha-aminoacyl-[protein] = an N-terminal L-phenylalanyl-L-alpha-aminoacyl-[protein] + tRNA(Phe). Functions in the N-end rule pathway of protein degradation where it conjugates Leu, Phe and, less efficiently, Met from aminoacyl-tRNAs to the N-termini of proteins containing an N-terminal arginine or lysine. This Tolumonas auensis (strain DSM 9187 / NBRC 110442 / TA 4) protein is Leucyl/phenylalanyl-tRNA--protein transferase.